The following is a 278-amino-acid chain: Rhomboid protease GlpG (278 aa).

A run of 6 helical transmembrane segments spans residues 95-115 (GPLT…MQIL), 143-163 (AFLH…WYLG), 170-190 (LGSG…GWAQ), 192-212 (LFSG…MGYC), 224-241 (LMLP…LVAG), and 245-267 (ILGM…LMAF). Serine 202 (nucleophile) is an active-site residue. The active site involves histidine 255.

The protein belongs to the peptidase S54 family.

The protein resides in the cell inner membrane. It carries out the reaction Cleaves type-1 transmembrane domains using a catalytic dyad composed of serine and histidine that are contributed by different transmembrane domains.. Its function is as follows. Rhomboid-type serine protease that catalyzes intramembrane proteolysis. In Serratia proteamaculans (strain 568), this protein is Rhomboid protease GlpG.